The following is a 193-amino-acid chain: ATP-dependent Clp protease proteolytic subunit (193 aa).

S98 (nucleophile) is an active-site residue. H123 is a catalytic residue.

It belongs to the peptidase S14 family. Fourteen ClpP subunits assemble into 2 heptameric rings which stack back to back to give a disk-like structure with a central cavity, resembling the structure of eukaryotic proteasomes.

Its subcellular location is the cytoplasm. It catalyses the reaction Hydrolysis of proteins to small peptides in the presence of ATP and magnesium. alpha-casein is the usual test substrate. In the absence of ATP, only oligopeptides shorter than five residues are hydrolyzed (such as succinyl-Leu-Tyr-|-NHMec, and Leu-Tyr-Leu-|-Tyr-Trp, in which cleavage of the -Tyr-|-Leu- and -Tyr-|-Trp bonds also occurs).. Cleaves peptides in various proteins in a process that requires ATP hydrolysis. Has a chymotrypsin-like activity. Plays a major role in the degradation of misfolded proteins. This is ATP-dependent Clp protease proteolytic subunit from Lachnospira eligens (strain ATCC 27750 / DSM 3376 / VPI C15-48 / C15-B4) (Eubacterium eligens).